Here is a 332-residue protein sequence, read N- to C-terminus: Glycerol-3-phosphate dehydrogenase [NAD(P)+] (332 aa).

Residues tryptophan 13, lysine 34, and lysine 108 each coordinate NADPH. 3 residues coordinate sn-glycerol 3-phosphate: lysine 108, glycine 136, and serine 138. Residue alanine 140 coordinates NADPH. 5 residues coordinate sn-glycerol 3-phosphate: lysine 191, aspartate 244, serine 254, arginine 255, and asparagine 256. The active-site Proton acceptor is lysine 191. Arginine 255 contacts NADPH. Valine 279 and glutamate 281 together coordinate NADPH.

The protein belongs to the NAD-dependent glycerol-3-phosphate dehydrogenase family.

The protein localises to the cytoplasm. It carries out the reaction sn-glycerol 3-phosphate + NAD(+) = dihydroxyacetone phosphate + NADH + H(+). The catalysed reaction is sn-glycerol 3-phosphate + NADP(+) = dihydroxyacetone phosphate + NADPH + H(+). It participates in membrane lipid metabolism; glycerophospholipid metabolism. Functionally, catalyzes the reduction of the glycolytic intermediate dihydroxyacetone phosphate (DHAP) to sn-glycerol 3-phosphate (G3P), the key precursor for phospholipid synthesis. This Francisella philomiragia subsp. philomiragia (strain ATCC 25017 / CCUG 19701 / FSC 153 / O#319-036) protein is Glycerol-3-phosphate dehydrogenase [NAD(P)+].